Here is a 475-residue protein sequence, read N- to C-terminus: Ubiquilin-like protein (475 aa).

Residues 31–105 (TRVIVKTAGN…IYLVIKSKQG (75 aa)) form the Ubiquitin-like domain. 2 disordered regions span residues 113-138 (FRDL…VHQP) and 305-325 (QVQS…QLTQ). A compositionally biased stretch (polar residues) spans 129-138 (KGNSSRVHQP).

The sequence is that of Ubiquilin-like protein (UBQLNL) from Homo sapiens (Human).